The chain runs to 618 residues: Chaperone protein dnaK (618 aa).

The tract at residues 595-618 (SKTETTTPNKNEEDVIDASFSEEK) is disordered.

Belongs to the heat shock protein 70 family.

It is found in the plastid. It localises to the cyanelle. Its function is as follows. Acts as a chaperone. The sequence is that of Chaperone protein dnaK (dnaK-A) from Cyanophora paradoxa.